A 350-amino-acid chain; its full sequence is Heat-inducible transcription repressor HrcA (350 aa).

The protein belongs to the HrcA family.

In terms of biological role, negative regulator of class I heat shock genes (grpE-dnaK-dnaJ and groELS operons). Prevents heat-shock induction of these operons. The chain is Heat-inducible transcription repressor HrcA from Xanthomonas oryzae pv. oryzae (strain KACC10331 / KXO85).